Reading from the N-terminus, the 494-residue chain is Tripartite motif-containing protein 5 (494 aa).

Ala-2 is subject to N-acetylalanine. The RING-type zinc finger occupies 15–59 (CPICLELLTQPLSLDCGHSFCQACLTANHKTSMPDEGERSCPVCR). A Phosphoserine modification is found at Ser-86. The segment at 91–133 (QKVDHCARHGEKLLLFCREDRKVICWLCERSQEHRGHHTFLTE) adopts a B box-type zinc-finger fold. Residues Cys-96, His-99, Cys-118, and His-124 each contribute to the Zn(2+) site. Residues 132–241 (TEEVAQEYQV…LISDLEHRLQ (110 aa)) are a coiled coil. The required for interaction with GABARAP and for autophagy stretch occupies residues 186 to 199 (FEQLRHILDWVESN). The B30.2/SPRY domain maps to 282-494 (LKVMLKKLRE…VPMTLCSPSS (213 aa)).

This sequence belongs to the TRIM/RBCC family. Can form homodimers and homotrimers. In addition to lower-order dimerization, also exhibits a higher-order multimerization and both low- and high-order multimerizations are essential for its restriction activity. Interacts with BTBD1 and BTBD2. Interacts with PSMC4, PSMC5, PSMD7 and HSPA8/HSC70. Interacts (via B30.2/SPRY domain) with HSPA1A/B. Interacts with PSMC2, MAP3K7/TAK1, TAB2 and TAB3. Interacts with SQSTM1. Interacts with TRIM6 and TRIM34. Interacts with ULK1 (phosphorylated form), GABARAP, GABARAPL1, GABARAPL2, MAP1LC3A, MAP1LC3C and BECN1. In terms of processing, degraded in a proteasome-independent fashion in the absence of viral infection but in a proteasome-dependent fashion following exposure to restriction sensitive virus. Post-translationally, autoubiquitinated in a RING finger- and UBE2D2-dependent manner. Monoubiquitinated by TRIM21. Deubiquitinated by Yersinia YopJ. Ubiquitination may not lead to proteasomal degradation.

The protein resides in the cytoplasm. Its subcellular location is the nucleus. The catalysed reaction is S-ubiquitinyl-[E2 ubiquitin-conjugating enzyme]-L-cysteine + [acceptor protein]-L-lysine = [E2 ubiquitin-conjugating enzyme]-L-cysteine + N(6)-ubiquitinyl-[acceptor protein]-L-lysine.. Its pathway is protein modification; protein ubiquitination. Functionally, capsid-specific restriction factor that prevents infection from non-host-adapted retroviruses. Blocks viral replication early in the life cycle, after viral entry but before reverse transcription. In addition to acting as a capsid-specific restriction factor, also acts as a pattern recognition receptor that activates innate immune signaling in response to the retroviral capsid lattice. Binding to the viral capsid triggers its E3 ubiquitin ligase activity, and in concert with the heterodimeric ubiquitin conjugating enzyme complex UBE2V1-UBE2N (also known as UBC13-UEV1A complex) generates 'Lys-63'-linked polyubiquitin chains, which in turn are catalysts in the autophosphorylation of the MAP3K7/TAK1 complex (includes TAK1, TAB2, and TAB3). Activation of the MAP3K7/TAK1 complex by autophosphorylation results in the induction and expression of NF-kappa-B and MAPK-responsive inflammatory genes, thereby leading to an innate immune response in the infected cell. Plays a role in regulating autophagy through activation of autophagy regulator BECN1 by causing its dissociation from its inhibitors BCL2 and TAB2. This is Tripartite motif-containing protein 5 (TRIM5) from Nomascus leucogenys (Northern white-cheeked gibbon).